A 99-amino-acid polypeptide reads, in one-letter code: UPF0235 protein AHA_3661 (99 aa).

This sequence belongs to the UPF0235 family.

The sequence is that of UPF0235 protein AHA_3661 from Aeromonas hydrophila subsp. hydrophila (strain ATCC 7966 / DSM 30187 / BCRC 13018 / CCUG 14551 / JCM 1027 / KCTC 2358 / NCIMB 9240 / NCTC 8049).